We begin with the raw amino-acid sequence, 349 residues long: CCN family member 2 (349 aa).

Residues 1–26 (MSATGLGPVRCAFVLLLALCSRPASS) form the signal peptide. An IGFBP N-terminal domain is found at 27 to 98 (QDCSAPCQCP…NRKIGVCTAK (72 aa)). Cystine bridges form between Cys-29–Cys-54, Cys-33–Cys-56, Cys-35–Cys-57, Cys-43–Cys-60, Cys-68–Cys-82, and Cys-74–Cys-95. A VWFC domain is found at 101–167 (APCVFGGTVY…GKCCEEWVCD (67 aa)). The 46-residue stretch at 198-243 (NCLVQTTEWSACSKTCGMGISTRVTNDNAFCRLEKQSRLCMVRPCE) folds into the TSP type-1 domain. Residues 247-349 (EENIKKGKKC…YYRKMYGDMA (103 aa)) form a heparin-binding region. Disulfide bonds link Cys-256–Cys-293, Cys-273–Cys-307, Cys-284–Cys-323, Cys-287–Cys-325, and Cys-292–Cys-329. The 75-residue stretch at 256 to 330 (CIRTPKISKP…KTCACHYNCP (75 aa)) folds into the CTCK domain.

This sequence belongs to the CCN family. In terms of assembly, monomer. Interacts with TSKU.

The protein localises to the secreted. The protein resides in the extracellular space. It localises to the extracellular matrix. Its function is as follows. Major connective tissue mitoattractant secreted by vascular endothelial cells. Promotes proliferation and differentiation of chondrocytes. Is involved in the stimulation of osteoblast differentiation and has a critical role in osteogenesis. Mediates heparin- and divalent cation-dependent cell adhesion in many cell types including fibroblasts, myofibroblasts, endothelial and epithelial cells. Enhances fibroblast growth factor-induced DNA synthesis. The sequence is that of CCN family member 2 (CCN2) from Bos taurus (Bovine).